Consider the following 255-residue polypeptide: dTDP-3-amino-3,6-dideoxy-alpha-D-glucopyranose N,N-dimethyltransferase (255 aa).

Residues tyrosine 14, tyrosine 22, tyrosine 33, alanine 58, 58 to 59 (AC), glutamate 79, 101 to 102 (DM), and methionine 117 contribute to the S-adenosyl-L-methionine site.

This sequence belongs to the methyltransferase TylM1/DesVI family. Homodimer.

It catalyses the reaction dTDP-3-amino-3,6-dideoxy-alpha-D-glucose + 2 S-adenosyl-L-methionine = dTDP-alpha-D-mycaminose + 2 S-adenosyl-L-homocysteine + 2 H(+). Its pathway is antibiotic biosynthesis; tylosin biosynthesis. Functionally, S-adenosyl-L-methionine-dependent methyltransferase involved in the biosynthesis of mycaminose, an essential structural component of the macrolide antibiotic tylosin. Involved in the last step in mycaminose biosynthesis by mediating dimethylation of the hexose C-3' amino group. In Streptomyces fradiae (Streptomyces roseoflavus), this protein is dTDP-3-amino-3,6-dideoxy-alpha-D-glucopyranose N,N-dimethyltransferase (tylM1).